The sequence spans 652 residues: Phosphomethylpyrimidine synthase (652 aa).

Residues Asn235, Met264, Tyr293, His329, 349–351 (SRG), 390–393 (DGMR), and Glu429 contribute to the substrate site. His433 is a Zn(2+) binding site. Position 456 (Tyr456) interacts with substrate. His497 contacts Zn(2+). 3 residues coordinate [4Fe-4S] cluster: Cys577, Cys580, and Cys585.

It belongs to the ThiC family. Homodimer. It depends on [4Fe-4S] cluster as a cofactor.

It catalyses the reaction 5-amino-1-(5-phospho-beta-D-ribosyl)imidazole + S-adenosyl-L-methionine = 4-amino-2-methyl-5-(phosphooxymethyl)pyrimidine + CO + 5'-deoxyadenosine + formate + L-methionine + 3 H(+). It functions in the pathway cofactor biosynthesis; thiamine diphosphate biosynthesis. Its function is as follows. Catalyzes the synthesis of the hydroxymethylpyrimidine phosphate (HMP-P) moiety of thiamine from aminoimidazole ribotide (AIR) in a radical S-adenosyl-L-methionine (SAM)-dependent reaction. This is Phosphomethylpyrimidine synthase from Shewanella sediminis (strain HAW-EB3).